The chain runs to 183 residues: Small ribosomal subunit protein uS5 (183 aa).

An S5 DRBM domain is found at 11–71 (FLERVVGINR…EEAKKSFFRV (61 aa)).

The protein belongs to the universal ribosomal protein uS5 family. In terms of assembly, part of the 30S ribosomal subunit. Contacts proteins S4 and S8.

In terms of biological role, with S4 and S12 plays an important role in translational accuracy. Functionally, located at the back of the 30S subunit body where it stabilizes the conformation of the head with respect to the body. The polypeptide is Small ribosomal subunit protein uS5 (Micrococcus luteus (Micrococcus lysodeikticus)).